A 213-amino-acid chain; its full sequence is Large ribosomal subunit protein uL3 (213 aa).

Gln-151 carries the post-translational modification N5-methylglutamine.

The protein belongs to the universal ribosomal protein uL3 family. As to quaternary structure, part of the 50S ribosomal subunit. Forms a cluster with proteins L14 and L19. Post-translationally, methylated by PrmB.

In terms of biological role, one of the primary rRNA binding proteins, it binds directly near the 3'-end of the 23S rRNA, where it nucleates assembly of the 50S subunit. This chain is Large ribosomal subunit protein uL3, found in Rhizobium leguminosarum bv. trifolii (strain WSM2304).